Consider the following 492-residue polypeptide: Tumor necrosis factor receptor superfamily member 8 (492 aa).

The signal sequence occupies residues 1–18; that stretch reads MSILLKAAGLLFLGMLQA. Topologically, residues 19-282 are extracellular; it reads FPKDRPLDTT…STGTPFLDPG (264 aa). TNFR-Cys repeat units follow at residues 57-104 and 105-141; these read PCPQ…PRIC and ECQP…NTIC. 4 cysteine pairs are disulfide-bonded: cysteine 58–cysteine 80, cysteine 83–cysteine 96, cysteine 86–cysteine 104, and cysteine 123–cysteine 141. The interval 141–178 is disordered; the sequence is CDLPSPGSGPNGSNPDDCKTLTSHTTPQAIPTLESPAN. Low complexity predominate over residues 144–155; that stretch reads PSPGSGPNGSNP. 3 N-linked (GlcNAc...) asparagine glycosylation sites follow: asparagine 151, asparagine 178, and asparagine 224. The span at 160 to 178 shows a compositional bias: polar residues; the sequence is TLTSHTTPQAIPTLESPAN. Residues 283 to 303 form a helical membrane-spanning segment; that stretch reads SMLFWVAMVVLLVGSASFLLC. The Cytoplasmic portion of the chain corresponds to 304–492; that stretch reads YWKACRRRFQ…DHEPTTVSEK (189 aa). Serine 334 and serine 348 each carry phosphoserine. Disordered stretches follow at residues 336-366 and 432-492; these read PTEK…PPAV and PEGR…VSEK. Polar residues predominate over residues 339–360; sequence KLTQLQRSGSVTDSSAGHTLSP. Basic and acidic residues-rich tracts occupy residues 450 to 459 and 478 to 492; these read EVDHTPHYPE and EGGK…VSEK.

This sequence belongs to the TNFR8 family. Interacts with TRAF1, TRAF2, TRAF3 and TRAF5. Very low level of expression. Detected in spleen, thymus and lung. Highly expressed in HTLV-1 infected T-cell lines.

The protein localises to the cell membrane. In terms of biological role, receptor for TNFSF8/CD30L. May play a role in the regulation of cellular growth and transformation of activated lymphoblasts. Regulates gene expression through activation of NF-kappa-B. The polypeptide is Tumor necrosis factor receptor superfamily member 8 (Rattus norvegicus (Rat)).